Here is a 349-residue protein sequence, read N- to C-terminus: MLKLVCAVFLIATVSAKGYDTGSRYSIGNYLSGYSGYGIGNRYSIGNYLSGYNGYDRGSRYSIGNYLPGYSGYGTGSRYSIGNYLPGYSGYGTGSRYSIGNYLPEYSGYGTGNRYSIGNYLPEYSGYGIGSRYSIGNYLPGYSGYGTGNRYSIGNYLPEYSGYGTSSRYSIGNYLSGYSGYGTGSRYSIGNYLSGYSRYGTGSRYSIGSYLSRYSGYGTGSRYSIGNYLSGYSGYGIGNRYSIGNYLPGYSGYYGGSYPSYRSTLTGVSQSLSFGRAVMSGQAFGAGVPAFGSVNFGNFGVGTGGIGILGGGVIGGGGVIGGGGVVGGGAVIGGGGGIPIGGIIRKKKY.

The N-terminal stretch at 1–16 (MLKLVCAVFLIATVSA) is a signal peptide.

In terms of tissue distribution, prismatic layer of shell (at protein level).

Its subcellular location is the secreted. This is Shematrin-like protein 1 from Margaritifera margaritifera (Freshwater pearl mussel).